Consider the following 172-residue polypeptide: Shikimate kinase (172 aa).

11–16 (GAGKST) serves as a coordination point for ATP. S15 provides a ligand contact to Mg(2+). 3 residues coordinate substrate: D33, R57, and G79. Position 117 (R117) interacts with ATP. Residue R136 participates in substrate binding. R153 contributes to the ATP binding site.

The protein belongs to the shikimate kinase family. As to quaternary structure, monomer. It depends on Mg(2+) as a cofactor.

Its subcellular location is the cytoplasm. The enzyme catalyses shikimate + ATP = 3-phosphoshikimate + ADP + H(+). Its pathway is metabolic intermediate biosynthesis; chorismate biosynthesis; chorismate from D-erythrose 4-phosphate and phosphoenolpyruvate: step 5/7. Its function is as follows. Catalyzes the specific phosphorylation of the 3-hydroxyl group of shikimic acid using ATP as a cosubstrate. This Pseudomonas savastanoi pv. phaseolicola (strain 1448A / Race 6) (Pseudomonas syringae pv. phaseolicola (strain 1448A / Race 6)) protein is Shikimate kinase.